Reading from the N-terminus, the 343-residue chain is MLTMENRGIRIAERYGYKLVPHFFNLFFILDNWNNIPIGKTIVSLYNYRQKEFVEIFKKYDENIGIATVNYTNVHVIKNHNEFEIIVYNVDSIHDHKSKYLLMLFLGNKFIFRRGKVYLYDIVIRNLIKSHDLQFKIKKINLIRVRSLFGNNIVSYYPKKELIRNSIILGKGANDSIYVITEINNKRVLYYVKRIRKIPRLNRIALKNHKLQYQFFKMLLQKGILQKETLFPIVPLRSLFTSLRISGTSEWKFSPLYVFNGRLVNANIYARAMNPVLIDYDYDETNQVLLKFADESYHSVLCGLDYKNMLWCITLPAITMWWRIKEVYKYVYDLDNQTKVFNY.

This is an uncharacterized protein from Saccharolobus islandicus (Sulfolobus islandicus).